The sequence spans 599 residues: DNA mismatch repair protein MutL (599 aa).

It belongs to the DNA mismatch repair MutL/HexB family.

Its function is as follows. This protein is involved in the repair of mismatches in DNA. It is required for dam-dependent methyl-directed DNA mismatch repair. May act as a 'molecular matchmaker', a protein that promotes the formation of a stable complex between two or more DNA-binding proteins in an ATP-dependent manner without itself being part of a final effector complex. This Rhodopseudomonas palustris (strain BisB18) protein is DNA mismatch repair protein MutL.